A 358-amino-acid chain; its full sequence is DNA polymerase IV (358 aa).

The region spanning 6–187 (IIHIDMDYFF…LDIGDFPGVG (182 aa)) is the UmuC domain. Asp10 and Asp105 together coordinate Mg(2+). Residue Glu106 is part of the active site.

It belongs to the DNA polymerase type-Y family. As to quaternary structure, monomer. It depends on Mg(2+) as a cofactor.

Its subcellular location is the cytoplasm. It catalyses the reaction DNA(n) + a 2'-deoxyribonucleoside 5'-triphosphate = DNA(n+1) + diphosphate. Poorly processive, error-prone DNA polymerase involved in untargeted mutagenesis. Copies undamaged DNA at stalled replication forks, which arise in vivo from mismatched or misaligned primer ends. These misaligned primers can be extended by PolIV. Exhibits no 3'-5' exonuclease (proofreading) activity. May be involved in translesional synthesis, in conjunction with the beta clamp from PolIII. The protein is DNA polymerase IV of Staphylococcus haemolyticus (strain JCSC1435).